The sequence spans 103 residues: Acylphosphatase-2 (103 aa).

Residues 13–103 enclose the Acylphosphatase-like domain; it reads SVDYEVFGRV…LQYNGFSTRY (91 aa). Catalysis depends on residues R28 and N46.

The protein belongs to the acylphosphatase family.

It catalyses the reaction an acyl phosphate + H2O = a carboxylate + phosphate + H(+). The sequence is that of Acylphosphatase-2 (acyp2) from Xenopus tropicalis (Western clawed frog).